A 500-amino-acid polypeptide reads, in one-letter code: Cytochrome P450 2D26 (500 aa).

Serine 249 carries the phosphoserine modification. Cysteine 446 contacts heme.

Belongs to the cytochrome P450 family. It depends on heme as a cofactor.

The protein localises to the endoplasmic reticulum membrane. Its subcellular location is the microsome membrane. The catalysed reaction is an organic molecule + reduced [NADPH--hemoprotein reductase] + O2 = an alcohol + oxidized [NADPH--hemoprotein reductase] + H2O + H(+). In terms of biological role, cytochromes P450 are a group of heme-thiolate monooxygenases. In liver microsomes, this enzyme is involved in an NADPH-dependent electron transport pathway. It oxidizes a variety of structurally unrelated compounds, including steroids, fatty acids, and xenobiotics. The polypeptide is Cytochrome P450 2D26 (Cyp2d26) (Rattus norvegicus (Rat)).